A 570-amino-acid polypeptide reads, in one-letter code: Sulfite reductase [NADPH] hemoprotein beta-component (570 aa).

Residues cysteine 434, cysteine 440, cysteine 479, and cysteine 483 each contribute to the [4Fe-4S] cluster site. Siroheme is bound at residue cysteine 483.

The protein belongs to the nitrite and sulfite reductase 4Fe-4S domain family. In terms of assembly, alpha(8)-beta(8). The alpha component is a flavoprotein, the beta component is a hemoprotein. Siroheme is required as a cofactor. It depends on [4Fe-4S] cluster as a cofactor.

The catalysed reaction is hydrogen sulfide + 3 NADP(+) + 3 H2O = sulfite + 3 NADPH + 4 H(+). It functions in the pathway sulfur metabolism; hydrogen sulfide biosynthesis; hydrogen sulfide from sulfite (NADPH route): step 1/1. Functionally, component of the sulfite reductase complex that catalyzes the 6-electron reduction of sulfite to sulfide. This is one of several activities required for the biosynthesis of L-cysteine from sulfate. The protein is Sulfite reductase [NADPH] hemoprotein beta-component of Salmonella paratyphi A (strain ATCC 9150 / SARB42).